An 818-amino-acid chain; its full sequence is ATM interactor (818 aa).

Residues 1-34 (MAATEAAAADSAGPAPGVPATPASTRGAAAASSP) show a composition bias toward low complexity. The tract at residues 1–62 (MAATEAAAAD…RAAAPVPPAR (62 aa)) is disordered. The segment at 80–105 (ILCTVRGCGKILPNSPALNMHLVKSH) adopts a C2H2-type 1 zinc-finger fold. The C2H2-type 2; degenerate zinc-finger motif lies at 161–181 (HKCSKCSNSYGTEWDLKRHEE). Over residues 210 to 221 (HEIPAEHRDPPS) the composition is skewed to basic and acidic residues. 2 disordered regions span residues 210–284 (HEIP…ATPP) and 603–625 (DNRSLLSDTNPGPDAQLPAGSAQ). Residues 219–437 (PPSKKRKMES…PDSSVSSCSQ (219 aa)) form a required for formation of RAD51 foci region. Composition is skewed to polar residues over residues 229–243 (YLQNQKLSSKTTEPL) and 603–612 (DNRSLLSDTN).

Interacts via its C-terminus with ATM. Interacts with DYNLL; this interaction inhibits ATMIN transcriptional activity and hence may play a role in a feedback loop whereby DYNLL1 inhibits transactivation of its own promoter by ATMIN. ATMIN.

It is found in the nucleus. Functionally, transcription factor. Plays a crucial role in cell survival and RAD51 foci formation in response to methylating DNA damage. Involved in regulating the activity of ATM in the absence of DNA damage. May play a role in stabilizing ATM. Binds to the DYNLL1 promoter and activates its transcription. This is ATM interactor from Mus musculus (Mouse).